The sequence spans 297 residues: Internalin C (297 aa).

An N-terminal signal peptide occupies residues 1–34 (MLKKNNWLQNAVIAMLVLIVGLCINMGSGTKVQA). LRR repeat units follow at residues 74-96 (LSGV…MQFF), 97-120 (TNLK…DLTK), 122-139 (EELS…GIPS), 140-161 (ACLS…LIHL), 162-184 (KNLE…GFLS), and 186-207 (LEVL…RLKK).

It belongs to the internalin family. In terms of assembly, interacts in vitro with human intestinal mucin-2 (MUC2) but not with mucin-1; binding is slightly better at pH 5.5, (the pH of the intestine) than at pH 7.4. Interacts with the SH3 6 domain of human DNMBP (Tuba). Interacts with I-kappa-B kinase alpha (IKKA, CHUK).

It is found in the secreted. The protein resides in the host cytoplasm. In terms of biological role, a virulence enhancer that has at least 2 dissociable functions in infection; it impairs translocation of host transcription factor NF-kappa-B to the nucleus and antagonizes the function of the Tuba dynamin-binding protein, promoting bacterial spreading. Perturbs the morphology of host cell junctions by impairing host DNMBP (Tuba) and WASL interaction, altering cortical tension at the cell junctions and allowing bacteria to more efficiently form bacteria-filled cell protrusions which promote bacterial spreading within infected host tissue. Down-regulates the host inflammation response usually induced by Listeria infection. Interacts with host I-kappa-B kinase alpha (IKKA, CHUK), which prevents IKKA from phosphorylating NF-kappa-B inhibitor alpha (IKBA, NFKBIA) and thus delays degradation of phospho-IKBA. Translocation of host transcription factor p65 (a subunit of NF-kappa-B, RELA) into the nucleus is impaired, which prevents activation of NF-KB-regulated genes. Recognized by serum from healthy humans exposed to L.monocytogenes as well from patients who have recovered from listeriosis. In Listeria monocytogenes serotype 1/2a (strain EGD / Mackaness), this protein is Internalin C.